Here is a 376-residue protein sequence, read N- to C-terminus: MAVSKFVQIRRDLHKIPEIGFEEWKTQQYILDYIGTLLNEHVEVKVWRTGVIVKVKGKNPEKVIGYRADIDGLPITEETGYEFASVHEGMMHACGHDLHTTIGLGLLTAAVTERIDDDLVFLFQPAEEGPGGALPMLESEELKEWKPNIILGLHIAPEYPVGTIATKEGLLFANTSELYVDLKGKGGHAAYPHTANDMIVAASHLVTQLQSVISRNVNPLDSAVITIGKITGGTVQNIIAEKSRLEGTIRTLSVESMSRVKSRIEAIVAGIEASFQCEAVIDYGAMYHQVYNHEALTREFMQFVSEQTDMKVITCTEAMTGEDFGYMLQEIPGFMFWLGVNSEYGLHHAKLKPDEEAIEKAIVFLDQYVKWKGTRK.

Asp69 is an active-site residue. Glu128 (proton acceptor) is an active-site residue.

It belongs to the peptidase M20A family. N-acetyldiaminopimelate deacetylase subfamily.

It carries out the reaction N-acetyl-(2S,6S)-2,6-diaminopimelate + H2O = (2S,6S)-2,6-diaminopimelate + acetate. The protein operates within amino-acid biosynthesis; L-lysine biosynthesis via DAP pathway; LL-2,6-diaminopimelate from (S)-tetrahydrodipicolinate (acetylase route): step 3/3. In terms of biological role, catalyzes the conversion of N-acetyl-diaminopimelate to diaminopimelate and acetate. In Bacillus thuringiensis subsp. konkukian (strain 97-27), this protein is N-acetyldiaminopimelate deacetylase.